Here is a 343-residue protein sequence, read N- to C-terminus: MLLLKKQTEDISSVYEIREKLGSGAFSEVMLAQERGSAHLVALKCIPKKALRGKEALVENEIAVLRRISHPNIVALEDVHESPSHLYLAMELVTGGELFDRIMERGSYTEKDASHLVGQVLGAVSYLHSLGIVHRDLKPENLLYATPFEDSKIMVSDFGLSKIQAGNMLGTACGTPGYVAPELLEQKPYGKAVDVWALGVISYILLCGYPPFYDESDPELFSQILRASYEFDSPFWDDISESAKDFIRHLLERDPQKRFTCQQALQHLWISGDAALDRDILGSVSEQIQKNFARTHWKRAFNATSFLRHIRKLGQSPEGEEASRQGMTRHSHPGLGTSQSPKW.

The region spanning 15–270 (YEIREKLGSG…CQQALQHLWI (256 aa)) is the Protein kinase domain. Residues 21 to 29 (LGSGAFSEV) and lysine 44 each bind ATP. Aspartate 136 functions as the Proton acceptor in the catalytic mechanism. The interval 290 to 311 (KNFARTHWKRAFNATSFLRHIR) is calmodulin-binding. Residues 314–343 (GQSPEGEEASRQGMTRHSHPGLGTSQSPKW) are disordered. Phosphoserine is present on serine 338.

It belongs to the protein kinase superfamily. CAMK Ser/Thr protein kinase family. CaMK subfamily. In terms of processing, isoform 1 and isoform 2 are phosphorylated by CAMKK1. Isoform 1 is expressed in liver, heart, lung, kidney, spleen and testis. Isoform 2 is predominantly expressed in cerebrum and cerebellum.

It is found in the cytoplasm. The protein localises to the nucleus. The enzyme catalyses L-seryl-[protein] + ATP = O-phospho-L-seryl-[protein] + ADP + H(+). It carries out the reaction L-threonyl-[protein] + ATP = O-phospho-L-threonyl-[protein] + ADP + H(+). With respect to regulation, activated by Ca(2+)/calmodulin. Must be phosphorylated to be maximally active. Activated by CAMKK1. Calcium/calmodulin-dependent protein kinase belonging to a proposed calcium-triggered signaling cascade. In vitro, isoform 1 and isoform 2 phosphorylate CREB1, SYN1/synapsin I. Phosphorylates and activates CAMK1. The polypeptide is Calcium/calmodulin-dependent protein kinase type 1B (Pnck) (Rattus norvegicus (Rat)).